Here is a 100-residue protein sequence, read N- to C-terminus: Small ribosomal subunit protein uS14 (100 aa).

This sequence belongs to the universal ribosomal protein uS14 family. As to quaternary structure, part of the 30S ribosomal subunit. Contacts proteins S3 and S10.

Binds 16S rRNA, required for the assembly of 30S particles and may also be responsible for determining the conformation of the 16S rRNA at the A site. The sequence is that of Small ribosomal subunit protein uS14 from Prochlorococcus marinus (strain MIT 9211).